A 2339-amino-acid polypeptide reads, in one-letter code: Voltage-dependent N-type calcium channel subunit alpha-1B (2339 aa).

A disordered region spans residues 1-37 (MVRFGDELGGRYGGPGGGERARGGGAGGAGGPGPGGL). At 1-90 (MVRFGDELGG…DNVVRKYAKR (90 aa)) the chain is on the cytoplasmic side. The span at 10 to 37 (GRYGGPGGGERARGGGAGGAGGPGPGGL) shows a compositional bias: gly residues. Residue arginine 22 is modified to Omega-N-methylarginine. Residues 82 to 359 (NVVRKYAKRI…LVLGVLSGEF (278 aa)) form an I repeat. Residues 91–114 (ITEWPPFEYMILATIIANCIVLAL) traverse the membrane as a helical segment. At 115–131 (EQHLPDGDKTPMSERLD) the chain is on the extracellular side. Residues 132-152 (DTEPYFIGIFCFEAGIKIIAL) traverse the membrane as a helical segment. Over 153-163 (GFVFHKGSYLR) the chain is Cytoplasmic. A helical transmembrane segment spans residues 164-182 (NGWNVMDFVVVLTGILATA). The Extracellular segment spans residues 183–187 (GTDFD). The chain crosses the membrane as a helical span at residues 188 to 211 (LRTLRAVRVLRPLKLVSGIPSLQV). Topologically, residues 212–221 (VLKSIMKAMV) are cytoplasmic. Residues 222–244 (PLLQIGLLLFFAILMFAIIGLEF) form a helical membrane-spanning segment. The Extracellular portion of the chain corresponds to 245 to 331 (YMGKFHKACF…NTNDAAGNTW (87 aa)). Asparagine 256 carries an N-linked (GlcNAc...) asparagine glycan. A helical membrane pass occupies residues 332–356 (NWLYFIPLIIIGSFFMLNLVLGVLS). At 357–482 (GEFAKERERV…FFIRRMVKAQ (126 aa)) the chain is on the cytoplasmic side. The segment at 379 to 396 (QQIERELNGYLEWIFKAE) is binding to the beta subunit. Phosphoserine is present on serine 411. 451-458 (ASLKSGKT) serves as a coordination point for ATP. One copy of the II repeat lies at 468–712 (EKMFRFFIRR…VFLAIAVDNL (245 aa)). A helical membrane pass occupies residues 483–501 (SFYWVVLCVVALNTLCVAM). The Extracellular segment spans residues 502–511 (VHYNQPRRLT). Residues 512–534 (TTLYFAEFVFLGLFLTEMSLKMY) traverse the membrane as a helical segment. At 535–544 (GLGPRSYFRS) the chain is on the cytoplasmic side. An a 1,2-diacyl-sn-glycero-3-phospho-(1D-myo-inositol-4,5-bisphosphate)-binding site is contributed by serine 544. The chain crosses the membrane as a helical span at residues 545-566 (SFNCFDFGVIVGSVFEVVWAAI). Topologically, residues 567–573 (KPGSSFG) are extracellular. The helical transmembrane segment at 574-586 (ISVLRALRLLRIF) threads the bilayer. Residues arginine 584 and lysine 587 each contribute to the a 1,2-diacyl-sn-glycero-3-phospho-(1D-myo-inositol-4,5-bisphosphate) site. The Cytoplasmic portion of the chain corresponds to 587–604 (KVTKYWSSLRNLVVSLLN). A helical transmembrane segment spans residues 605–630 (SMKSIISLLFLLFLFIVVFALLGMQL). Residues 631–682 (FGGQFNFQDETPTTNFDTFPAAILTVFQILTGEDWNAVMYHGIESQGGVSKG) lie on the Extracellular side of the membrane. Residues 683–709 (MFSSFYFIVLTLFGNYTLLNVFLAIAV) traverse the membrane as a helical segment. The Cytoplasmic segment spans residues 710-1151 (DNLANAQELT…FCHYIVTMRY (442 aa)). Phosphoserine occurs at positions 745, 748, and 783. Basic and acidic residues-rich tracts occupy residues 816 to 826 (PLVVELGRDGA), 857 to 886 (KDKT…EERP), 922 to 932 (GSPEEAAEREP), and 965 to 976 (GPREAESGEEPA). Disordered regions lie at residues 816–1038 (PLVV…VTVG) and 1054–1076 (QPED…DPNT). The segment covering 977-986 (RRHRARHKAQ) has biased composition (basic residues). Over residues 990–1029 (EAVEKETTEKEATEKEAEIVEADKEKELRNHQPREPHCDL) the composition is skewed to basic and acidic residues. Position 1069 is a phosphoserine (serine 1069). An III repeat occupies 1137–1419 (NLLRRFCHYI…IFVALIIITF (283 aa)). Residues 1152 to 1170 (FEVVILVVIALSSIALAAE) traverse the membrane as a helical segment. At 1171–1178 (DPVRTDSP) the chain is on the extracellular side. A helical membrane pass occupies residues 1179–1203 (RNNALKYLDYIFTGVFTFEMVIKMI). At 1204–1217 (DLGLLLHPGAYFRD) the chain is on the cytoplasmic side. Residues 1218–1238 (LWNILDFIVVSGALVAFAFSG) form a helical membrane-spanning segment. Residues 1239-1244 (SKGKDI) lie on the Extracellular side of the membrane. A helical transmembrane segment spans residues 1245-1265 (NTIKSLRVLRVLRPLKTIKRL). The Cytoplasmic portion of the chain corresponds to 1266–1283 (PKLKAVFDCVVNSLKNVL). The helical transmembrane segment at 1284-1303 (NILIVYMLFMFIFAVIAVQL) threads the bilayer. Topologically, residues 1304-1390 (FKGKFFYCTD…EQGPSPGYRM (87 aa)) are extracellular. The chain crosses the membrane as a helical span at residues 1391 to 1416 (ELSIFYVVYFVVFPFFFVNIFVALII). The Cytoplasmic segment spans residues 1417-1471 (ITFQEQGDKVMSECSLEKNERACIDFAISAKPLTRYMPQNRQSFQYKTWTFVVSP). One copy of the IV repeat lies at 1456–1711 (NRQSFQYKTW…LFVAVIMDNF (256 aa)). Residues 1472–1490 (PFEYFIMAMIALNTVVLMM) form a helical membrane-spanning segment. Residues 1491–1498 (KFYDAPYE) are Extracellular-facing. The helical transmembrane segment at 1499–1523 (YELMLKCLNIVFTSMFSMECVLKII) threads the bilayer. The Cytoplasmic portion of the chain corresponds to 1524–1533 (AFGVLNYFRD). Residues 1534 to 1555 (AWNVFDFVTVLGSITDILVTEI) traverse the membrane as a helical segment. At 1556–1563 (AETNNFIN) the chain is on the extracellular side. Asparagine 1563 carries an N-linked (GlcNAc...) asparagine glycan. The helical transmembrane segment at 1564-1582 (LSFLRLFRAARLIKLLRQG) threads the bilayer. Residues 1583-1601 (YTIRILLWTFVQSFKALPY) are Cytoplasmic-facing. Residues 1602-1621 (VCLLIAMLFFIYAIIGMQVF) form a helical membrane-spanning segment. Residues 1622–1683 (GNIALDDDTS…ANATECGSDF (62 aa)) lie on the Extracellular side of the membrane. N-linked (GlcNAc...) asparagine glycosylation occurs at asparagine 1675. The chain crosses the membrane as a helical span at residues 1684–1707 (AYFYFVSFIFLCSFLMLNLFVAVI). Residues 1708–2339 (MDNFEYLTRD…YHHPDQDHWC (632 aa)) lie on the Cytoplasmic side of the membrane. The EF-hand domain maps to 1724–1759 (HHLDEFIRVWAEYDPAACGRISYNDMFEMLKHMSPP). Ca(2+) contacts are provided by aspartate 1737, arginine 1743, and aspartate 1748. The span at 1916–1931 (SSTSLSNGGAIQNQES) shows a compositional bias: polar residues. 2 disordered regions span residues 1916–1968 (SSTS…VGRS) and 1981–2206 (TRRG…YKTA). Residues 1946–1960 (DAPHEARPPLERGHS) are compositionally biased toward basic and acidic residues. Over residues 2049–2063 (SHHHHHRCHRRRDRK) the composition is skewed to basic residues. At serine 2066 the chain carries Phosphoserine. Basic and acidic residues predominate over residues 2098–2116 (CRRERERRQERGRSQERRQ). The segment covering 2143–2153 (PSLSSHPTSPT) has biased composition (low complexity). Residues 2164-2180 (GSGSVNGSPLLSTSGAS) are compositionally biased toward polar residues. Phosphoserine is present on residues serine 2224, serine 2233, and serine 2256.

It belongs to the calcium channel alpha-1 subunit (TC 1.A.1.11) family. CACNA1B subfamily. In terms of assembly, multisubunit complex consisting of alpha-1, alpha-2, beta and delta subunits in a 1:1:1:1 ratio. The channel activity is directed by the pore-forming and voltage-sensitive alpha-1 subunit. In many cases, this subunit is sufficient to generate voltage-sensitive calcium channel activity. The auxiliary subunits beta and alpha-2/delta linked by a disulfide bridge regulate the channel activity. Interacts with RIMS1. Interacts with FMR1 (via C-terminus); this interaction induces a decrease in the number of presynaptic functional CACNA1B channels at the cell surface. In terms of processing, phosphorylated in vitro by CaM-kinase II, PKA, PKC and CGPK. In terms of tissue distribution, isoform Alpha-1b-1 and isoform Alpha-1b-2 are expressed in the central nervous system, but not in skeletal muscle or aorta. Expressed in the cerebral white matter, cortex, hippocampus, basal ganglia, and cerebellum.

The protein resides in the membrane. It carries out the reaction Ca(2+)(in) = Ca(2+)(out). With respect to regulation, is specifically blocked by omega-conotoxin GVIA. Is specifically blocked by omega-conotoxin MVIIA (ziconotide). Is insensitive to dihydropyridines (DHP). Its activity is regulated as follows. Is specifically blocked by omega-conotoxin MVIIA (ziconotide). Is insensitive to dihydropyridines (DHP). Its function is as follows. Voltage-sensitive calcium channels (VSCC) mediate the entry of calcium ions into excitable cells and are also involved in a variety of calcium-dependent processes, including muscle contraction, hormone or neurotransmitter release, gene expression, cell motility, cell division and cell death. This alpha-1B subunit gives rise to N-type calcium currents. N-type calcium channels belong to the 'high-voltage activated' (HVA) group. They are involved in pain signaling. Calcium channels containing alpha-1B subunit may play a role in directed migration of immature neurons. Mediates Ca(2+) release probability at hippocampal neuronal soma and synaptic terminals. Functionally, voltage-sensitive calcium channels (VSCC) mediate the entry of calcium ions into excitable cells and are also involved in a variety of calcium-dependent processes, including muscle contraction, hormone or neurotransmitter release, gene expression, cell motility, cell division and cell death. This alpha-1B subunit gives rise to N-type calcium currents. This Homo sapiens (Human) protein is Voltage-dependent N-type calcium channel subunit alpha-1B (CACNA1B).